The following is a 129-amino-acid chain: MTLVVLATGLLASGTAVSNADQASELNVDVHSSNVLATEDTRFLRSHQITDDKVEINEHGEEERMSGSNLFSALKLEKMGRDTSYRDKEFQRWKNYGNSVGDVTPHVPVSLKEAYATYLRIREMVLVND.

Residues 1–16 (MTLVVLATGLLASGTA) form the signal peptide. The short motif at 42 to 64 (RFLRSHQITDDKVEINEHGEEER) is the RxLR-dEER element.

It belongs to the RxLR effector family.

The protein localises to the secreted. It localises to the host cytoplasm. It is found in the host cell membrane. Its function is as follows. Effector that suppresses flg22-induced post-translational MAP kinase activation in tomato but not in Arabidopsis. The perception of highly conserved pathogen- or microbe-associated molecular patterns (PAMPs/MAMPs), such as flg22, triggers converging signaling pathways recruiting MAP kinase cascades and inducing transcriptional re-programming, yielding a generic antimicrobial response. This chain is RxLR effector protein SFI6, found in Phytophthora infestans (strain T30-4) (Potato late blight agent).